A 281-amino-acid chain; its full sequence is Phosphonates import ATP-binding protein PhnC (281 aa).

Residues 5–253 (IEVCGLTKSF…MLRDLYGTEA (249 aa)) form the ABC transporter domain. ATP is bound at residue 38-45 (GASGSGKS).

It belongs to the ABC transporter superfamily. Phosphonates importer (TC 3.A.1.9.1) family. The complex is composed of two ATP-binding proteins (PhnC), two transmembrane proteins (PhnE) and a solute-binding protein (PhnD).

Its subcellular location is the cell inner membrane. It catalyses the reaction phosphonate(out) + ATP + H2O = phosphonate(in) + ADP + phosphate + H(+). Functionally, part of the ABC transporter complex PhnCDE involved in phosphonates import. Responsible for energy coupling to the transport system. The polypeptide is Phosphonates import ATP-binding protein PhnC (Cupriavidus pinatubonensis (strain JMP 134 / LMG 1197) (Cupriavidus necator (strain JMP 134))).